Reading from the N-terminus, the 546-residue chain is Probable protein kinase UbiB (546 aa).

The 379-residue stretch at 124 to 502 folds into the Protein kinase domain; sequence DFEIKPLASA…HVRQGQSRYF (379 aa). ATP-binding positions include 130-138 and Lys-153; that span reads LASASIAQV. The active-site Proton acceptor is Asp-288. 2 helical membrane passes run 501 to 521 and 522 to 542; these read YFLGIGATLVLSGTFLLVSRP and EWGLMPVWLMAGGLIAWFVGW.

The protein belongs to the ABC1 family. UbiB subfamily.

The protein localises to the cell inner membrane. Its pathway is cofactor biosynthesis; ubiquinone biosynthesis [regulation]. Is probably a protein kinase regulator of UbiI activity which is involved in aerobic coenzyme Q (ubiquinone) biosynthesis. This Escherichia coli (strain SMS-3-5 / SECEC) protein is Probable protein kinase UbiB.